The chain runs to 105 residues: Large ribosomal subunit protein uL24 (105 aa).

The protein belongs to the universal ribosomal protein uL24 family. As to quaternary structure, part of the 50S ribosomal subunit.

Functionally, one of two assembly initiator proteins, it binds directly to the 5'-end of the 23S rRNA, where it nucleates assembly of the 50S subunit. One of the proteins that surrounds the polypeptide exit tunnel on the outside of the subunit. This is Large ribosomal subunit protein uL24 from Francisella tularensis subsp. tularensis (strain FSC 198).